The following is a 70-amino-acid chain: Large ribosomal subunit protein bL31 (70 aa).

Zn(2+)-binding residues include Cys16, Cys18, Cys37, and Cys40.

The protein belongs to the bacterial ribosomal protein bL31 family. Type A subfamily. Part of the 50S ribosomal subunit. Zn(2+) is required as a cofactor.

Its function is as follows. Binds the 23S rRNA. The sequence is that of Large ribosomal subunit protein bL31 from Shewanella woodyi (strain ATCC 51908 / MS32).